Here is a 363-residue protein sequence, read N- to C-terminus: Chorismate synthase (363 aa).

NADP(+) is bound by residues Arg-48 and Arg-54. FMN contacts are provided by residues 125–127 (RSS), 237–238 (NA), Gly-277, 292–296 (KPTSS), and Arg-318.

The protein belongs to the chorismate synthase family. As to quaternary structure, homotetramer. Requires FMNH2 as cofactor.

It carries out the reaction 5-O-(1-carboxyvinyl)-3-phosphoshikimate = chorismate + phosphate. It participates in metabolic intermediate biosynthesis; chorismate biosynthesis; chorismate from D-erythrose 4-phosphate and phosphoenolpyruvate: step 7/7. Catalyzes the anti-1,4-elimination of the C-3 phosphate and the C-6 proR hydrogen from 5-enolpyruvylshikimate-3-phosphate (EPSP) to yield chorismate, which is the branch point compound that serves as the starting substrate for the three terminal pathways of aromatic amino acid biosynthesis. This reaction introduces a second double bond into the aromatic ring system. The protein is Chorismate synthase of Pseudomonas syringae pv. syringae (strain B728a).